The sequence spans 313 residues: D-beta-D-heptose 7-phosphate kinase (313 aa).

196-199 contacts ATP; it reads NRAE. The active site involves Asp264.

The enzyme catalyses D-glycero-beta-D-manno-heptose 7-phosphate + ATP = D-glycero-beta-D-manno-heptose 1,7-bisphosphate + ADP + H(+). It participates in nucleotide-sugar biosynthesis; ADP-L-glycero-beta-D-manno-heptose biosynthesis; ADP-L-glycero-beta-D-manno-heptose from D-glycero-beta-D-manno-heptose 7-phosphate: step 1/4. The protein operates within bacterial outer membrane biogenesis; LPS core biosynthesis. Catalyzes the phosphorylation of D-glycero-D-manno-heptose 7-phosphate at the C-1 position to selectively form D-glycero-beta-D-manno-heptose-1,7-bisphosphate. This is D-beta-D-heptose 7-phosphate kinase (rfaE) from Bordetella bronchiseptica (strain ATCC BAA-588 / NCTC 13252 / RB50) (Alcaligenes bronchisepticus).